The primary structure comprises 68 residues: UPF0253 protein VFMJ11_0680 (68 aa).

It belongs to the UPF0253 family.

The polypeptide is UPF0253 protein VFMJ11_0680 (Aliivibrio fischeri (strain MJ11) (Vibrio fischeri)).